The chain runs to 1316 residues: Serine/threonine-protein kinase 36 (1316 aa).

The Protein kinase domain occupies 4–254 (YHVLEMIGEG…WPDLLHHPFI (251 aa)). ATP contacts are provided by residues 10–18 (IGEGSFGRV) and Lys-33. Asp-125 (proton acceptor) is an active-site residue. Positions 389-418 (QGFPEPRPEAMGRQSTDVVDPENEEPDSDD) are disordered. The span at 407 to 418 (VDPENEEPDSDD) shows a compositional bias: acidic residues.

The protein belongs to the protein kinase superfamily. Ser/Thr protein kinase family. Interacts with SPAG16 and KIF27. The cofactor is Mg(2+). Weakly expressed in the heart and thymus, present at moderate to high levels in the lungs, pancreas, and kidneys and at higher levels in the brain and cerebellum. Very highly expressed in the testis.

It localises to the cytoplasm. It is found in the nucleus. The protein resides in the cytoskeleton. Its subcellular location is the cilium axoneme. The enzyme catalyses L-seryl-[protein] + ATP = O-phospho-L-seryl-[protein] + ADP + H(+). The catalysed reaction is L-threonyl-[protein] + ATP = O-phospho-L-threonyl-[protein] + ADP + H(+). Serine/threonine protein kinase which plays an important role in the sonic hedgehog (Shh) pathway by regulating the activity of GLI transcription factors. Controls the activity of the transcriptional regulators GLI1, GLI2 and GLI3 by opposing the effect of SUFU and promoting their nuclear localization. GLI2 requires an additional function of STK36 to become transcriptionally active, but the enzyme does not need to possess an active kinase catalytic site for this to occur. Required for postnatal development, possibly by regulating the homeostasis of cerebral spinal fluid or ciliary function. Essential for construction of the central pair apparatus of motile cilia. In Mus musculus (Mouse), this protein is Serine/threonine-protein kinase 36.